Here is an 898-residue protein sequence, read N- to C-terminus: Putative disease resistance protein At1g63350 (898 aa).

The stretch at Val24–Asn88 forms a coiled coil. Residues Asp137–Gly440 form the NB-ARC domain. Gly179–Thr186 is a binding site for ATP. LRR repeat units lie at residues Val516 to Met537, Glu538 to Ser559, Lys562 to Leu584, Ser586 to Lys608, Lys609 to His631, and Asn632 to Glu654.

It belongs to the disease resistance NB-LRR family.

In terms of biological role, potential disease resistance protein. The protein is Putative disease resistance protein At1g63350 of Arabidopsis thaliana (Mouse-ear cress).